We begin with the raw amino-acid sequence, 200 residues long: Large ribosomal subunit protein uL4c (200 aa).

The segment at 45 to 71 (RAEIRGGGRKPWKQKGTGRARAGSRRS) is disordered. Residues 51–68 (GGRKPWKQKGTGRARAGS) show a composition bias toward basic residues.

It belongs to the universal ribosomal protein uL4 family. In terms of assembly, part of the 50S ribosomal subunit.

Its subcellular location is the plastid. The protein localises to the chloroplast. In terms of biological role, probably binds the 23S rRNA. The protein is Large ribosomal subunit protein uL4c (rpl4) of Cyanidioschyzon merolae (strain NIES-3377 / 10D) (Unicellular red alga).